The chain runs to 448 residues: Maintenance of mitochondrial morphology protein 1 (448 aa).

The Lumenal segment spans residues 1–74 (MTESVIYSGT…LNHTWSFTQG (74 aa)). A helical membrane pass occupies residues 75-95 (LVVGQLSVIVVVAIFIKFFVF). Topologically, residues 96 to 448 (ADSSATTTTT…IVDKTEEASI (353 aa)) are cytoplasmic. Disordered regions lie at residues 119-144 (RNKN…LNSP) and 303-357 (LQNV…SQED). The span at 127-140 (SNEDKDPNNNKEDD) shows a compositional bias: basic and acidic residues. One can recognise an SMP-LTD domain in the interval 164–419 (SPESLDWFNV…EPRFQVVKVP (256 aa)). The span at 313–332 (PSNEPNSQNQTQQPTPVNNS) shows a compositional bias: low complexity. The segment covering 345-356 (ETKHSKAKRSQE) has biased composition (basic and acidic residues).

It belongs to the MMM1 family. Homodimer. Component of the ER-mitochondria encounter structure (ERMES) or MDM complex, composed of MMM1, MDM10, MDM12 and MDM34. An MMM1 homodimer associates with one molecule of MDM12 on each side in a pairwise head-to-tail manner, and the SMP-LTD domains of MMM1 and MDM12 generate a continuous hydrophobic tunnel for phospholipid trafficking.

It is found in the endoplasmic reticulum membrane. Functionally, component of the ERMES/MDM complex, which serves as a molecular tether to connect the endoplasmic reticulum (ER) and mitochondria. Components of this complex are involved in the control of mitochondrial shape and protein biogenesis, and function in nonvesicular lipid trafficking between the ER and mitochondria. The MDM12-MMM1 subcomplex functions in the major beta-barrel assembly pathway that is responsible for biogenesis of all outer membrane beta-barrel proteins, and acts in a late step after the SAM complex. The MDM10-MDM12-MMM1 subcomplex further acts in the TOM40-specific pathway after the action of the MDM12-MMM1 complex. Essential for establishing and maintaining the structure of mitochondria and maintenance of mtDNA nucleoids. This Debaryomyces hansenii (strain ATCC 36239 / CBS 767 / BCRC 21394 / JCM 1990 / NBRC 0083 / IGC 2968) (Yeast) protein is Maintenance of mitochondrial morphology protein 1.